A 416-amino-acid chain; its full sequence is Multifunctional CCA protein (416 aa).

The ATP site is built by Gly8 and Arg11. CTP is bound by residues Gly8 and Arg11. 2 residues coordinate Mg(2+): Asp21 and Asp23. Residues Arg91, Arg137, and Arg140 each contribute to the ATP site. The CTP site is built by Arg91, Arg137, and Arg140. In terms of domain architecture, HD spans 228 to 329 (TGVHTLMVLA…VKIFDKADFW (102 aa)).

It belongs to the tRNA nucleotidyltransferase/poly(A) polymerase family. Bacterial CCA-adding enzyme type 1 subfamily. Monomer. Can also form homodimers and oligomers. The cofactor is Mg(2+). Requires Ni(2+) as cofactor.

It carries out the reaction a tRNA precursor + 2 CTP + ATP = a tRNA with a 3' CCA end + 3 diphosphate. It catalyses the reaction a tRNA with a 3' CCA end + 2 CTP + ATP = a tRNA with a 3' CCACCA end + 3 diphosphate. In terms of biological role, catalyzes the addition and repair of the essential 3'-terminal CCA sequence in tRNAs without using a nucleic acid template. Adds these three nucleotides in the order of C, C, and A to the tRNA nucleotide-73, using CTP and ATP as substrates and producing inorganic pyrophosphate. tRNA 3'-terminal CCA addition is required both for tRNA processing and repair. Also involved in tRNA surveillance by mediating tandem CCA addition to generate a CCACCA at the 3' terminus of unstable tRNAs. While stable tRNAs receive only 3'-terminal CCA, unstable tRNAs are marked with CCACCA and rapidly degraded. The chain is Multifunctional CCA protein from Shewanella baltica (strain OS155 / ATCC BAA-1091).